The following is a 359-amino-acid chain: 1-deoxy-D-xylulose 5-phosphate reductoisomerase (359 aa).

NADPH-binding residues include Thr7, Gly8, Ser9, Ile10, Gly31, Lys32, Asn33, and Asn111. Residue Lys112 participates in 1-deoxy-D-xylulose 5-phosphate binding. Residue Glu113 participates in NADPH binding. Asp131 is a Mn(2+) binding site. The 1-deoxy-D-xylulose 5-phosphate site is built by Ser132, Glu133, Ser155, and His178. Mn(2+) is bound at residue Glu133. Position 184 (Gly184) interacts with NADPH. Ser191, Asn196, Lys197, and Glu200 together coordinate 1-deoxy-D-xylulose 5-phosphate. Residue Glu200 participates in Mn(2+) binding.

Belongs to the DXR family. Mg(2+) is required as a cofactor. Requires Mn(2+) as cofactor.

It carries out the reaction 2-C-methyl-D-erythritol 4-phosphate + NADP(+) = 1-deoxy-D-xylulose 5-phosphate + NADPH + H(+). Its pathway is isoprenoid biosynthesis; isopentenyl diphosphate biosynthesis via DXP pathway; isopentenyl diphosphate from 1-deoxy-D-xylulose 5-phosphate: step 1/6. Functionally, catalyzes the NADPH-dependent rearrangement and reduction of 1-deoxy-D-xylulose-5-phosphate (DXP) to 2-C-methyl-D-erythritol 4-phosphate (MEP). The chain is 1-deoxy-D-xylulose 5-phosphate reductoisomerase from Campylobacter lari (strain RM2100 / D67 / ATCC BAA-1060).